We begin with the raw amino-acid sequence, 200 residues long: V-set and transmembrane domain-containing protein 5 (200 aa).

The N-terminal stretch at 1–28 is a signal peptide; the sequence is MRPLPSGRRKTRGISLGLFALCLAAARC. Residues 29–147 lie on the Extracellular side of the membrane; the sequence is LQSQGVSLYI…VSEILYEDLH (119 aa). Positions 37 to 139 constitute an Ig-like C2-type domain; that stretch reads YIPQATINAT…QFGTIVLHVS (103 aa). N-linked (GlcNAc...) asparagine glycosylation occurs at N102. The chain crosses the membrane as a helical span at residues 148–168; sequence FVAVILAFLAAVAAVLISLMW. Residues 169–200 lie on the Cytoplasmic side of the membrane; it reads VCNKCAYKFQRKRRHKLKESTTEEIELEDVEC. The interval 170 to 186 is important for CDC42-dependent filopodia induction; it reads CNKCAYKFQRKRRHKLK.

As to quaternary structure, can homooligomerize through cis interactions within the same cell membrane. Post-translationally, N-glycosylated.

The protein localises to the cell membrane. It is found in the cell projection. Its subcellular location is the dendrite. The protein resides in the axon. Its function is as follows. Cell adhesion-like membrane protein of the central nervous system (CNS) which modulates both the position and complexity of central neurons by altering their membrane morphology and dynamics. Involved in the formation of neuronal dendrites and protrusions including dendritic filopodia. In synaptogenesis, regulates synapse formation by altering dendritic spine morphology and actin distribution. Promotes formation of unstable neuronal spines such as thin and branched types. Regulates neuronal morphogenesis and migration during cortical development in the brain. The protein is V-set and transmembrane domain-containing protein 5 (VSTM5) of Homo sapiens (Human).